The sequence spans 95 residues: Aspartyl/glutamyl-tRNA(Asn/Gln) amidotransferase subunit C (95 aa).

Belongs to the GatC family. In terms of assembly, heterotrimer of A, B and C subunits.

It carries out the reaction L-glutamyl-tRNA(Gln) + L-glutamine + ATP + H2O = L-glutaminyl-tRNA(Gln) + L-glutamate + ADP + phosphate + H(+). The catalysed reaction is L-aspartyl-tRNA(Asn) + L-glutamine + ATP + H2O = L-asparaginyl-tRNA(Asn) + L-glutamate + ADP + phosphate + 2 H(+). In terms of biological role, allows the formation of correctly charged Asn-tRNA(Asn) or Gln-tRNA(Gln) through the transamidation of misacylated Asp-tRNA(Asn) or Glu-tRNA(Gln) in organisms which lack either or both of asparaginyl-tRNA or glutaminyl-tRNA synthetases. The reaction takes place in the presence of glutamine and ATP through an activated phospho-Asp-tRNA(Asn) or phospho-Glu-tRNA(Gln). This Acidiphilium cryptum (strain JF-5) protein is Aspartyl/glutamyl-tRNA(Asn/Gln) amidotransferase subunit C.